We begin with the raw amino-acid sequence, 111 residues long: ATP-dependent Clp protease adapter protein ClpS (111 aa).

It belongs to the ClpS family. Binds to the N-terminal domain of the chaperone ClpA.

In terms of biological role, involved in the modulation of the specificity of the ClpAP-mediated ATP-dependent protein degradation. This Corynebacterium aurimucosum (strain ATCC 700975 / DSM 44827 / CIP 107346 / CN-1) (Corynebacterium nigricans) protein is ATP-dependent Clp protease adapter protein ClpS.